Consider the following 225-residue polypeptide: Protein GrpE (225 aa).

Over residues 1-15 (MSGDASTPEQDQNVV) the composition is skewed to polar residues. 2 disordered regions span residues 1 to 48 (MSGD…DRMQ) and 198 to 225 (VSMG…AEEA). The span at 201–225 (GPGPSDPGSAPAEAAAAPDQTAEEA) shows a compositional bias: low complexity.

It belongs to the GrpE family. Homodimer.

It is found in the cytoplasm. Its function is as follows. Participates actively in the response to hyperosmotic and heat shock by preventing the aggregation of stress-denatured proteins, in association with DnaK and GrpE. It is the nucleotide exchange factor for DnaK and may function as a thermosensor. Unfolded proteins bind initially to DnaJ; upon interaction with the DnaJ-bound protein, DnaK hydrolyzes its bound ATP, resulting in the formation of a stable complex. GrpE releases ADP from DnaK; ATP binding to DnaK triggers the release of the substrate protein, thus completing the reaction cycle. Several rounds of ATP-dependent interactions between DnaJ, DnaK and GrpE are required for fully efficient folding. The protein is Protein GrpE of Synechococcus sp. (strain CC9605).